A 354-amino-acid polypeptide reads, in one-letter code: GTPase Obg (354 aa).

The Obg domain maps to Met1 to Ile159. In terms of domain architecture, OBG-type G spans Ala160–Arg328. GTP contacts are provided by residues Gly166 to Ser173, Phe191 to Thr195, Asp213 to Gly216, Asn280 to Asp283, and Ser309 to Val311. Residues Ser173 and Thr193 each contribute to the Mg(2+) site. Residues Glu333–Pro354 are disordered. Positions Ala339 to Thr348 are enriched in acidic residues.

This sequence belongs to the TRAFAC class OBG-HflX-like GTPase superfamily. OBG GTPase family. Monomer. Mg(2+) serves as cofactor.

It localises to the cytoplasm. Its function is as follows. An essential GTPase which binds GTP, GDP and possibly (p)ppGpp with moderate affinity, with high nucleotide exchange rates and a fairly low GTP hydrolysis rate. Plays a role in control of the cell cycle, stress response, ribosome biogenesis and in those bacteria that undergo differentiation, in morphogenesis control. This Caulobacter sp. (strain K31) protein is GTPase Obg.